A 1132-amino-acid chain; its full sequence is Mediator of RNA polymerase II transcription subunit 5 (1132 aa).

The span at 998 to 1023 (KGDVDIKGEDLHEKNDSAEVRQETQP) shows a compositional bias: basic and acidic residues. A disordered region spans residues 998–1070 (KGDVDIKGED…RTNNVPMIKA (73 aa)). Positions 1047 to 1057 (YEEEEENEDND) are enriched in acidic residues.

The protein belongs to the Mediator complex subunit 5 family. In terms of assembly, component of the Mediator complex, which is composed of at least 21 subunits that form three structurally distinct submodules. The Mediator head module contains MED6, MED8, MED11, SRB4/MED17, SRB5/MED18, ROX3/MED19, SRB2/MED20 and SRB6/MED22, the middle module contains MED1, MED4, NUT1/MED5, MED7, CSE2/MED9, NUT2/MED10, SRB7/MED21 and SOH1/MED31, and the tail module contains MED2, PGD1/MED3, RGR1/MED14, GAL11/MED15 and SIN4/MED16. The head and the middle modules interact directly with RNA polymerase II, whereas the elongated tail module interacts with gene-specific regulatory proteins.

The protein resides in the nucleus. Functionally, component of the Mediator complex, a coactivator involved in the regulated transcription of nearly all RNA polymerase II-dependent genes. Mediator functions as a bridge to convey information from gene-specific regulatory proteins to the basal RNA polymerase II transcription machinery. The Mediator complex, having a compact conformation in its free form, is recruited to promoters by direct interactions with regulatory proteins and serves for the assembly of a functional preinitiation complex with RNA polymerase II and the general transcription factors. The Mediator complex unfolds to an extended conformation and partially surrounds RNA polymerase II, specifically interacting with the unphosphorylated form of the C-terminal domain (CTD) of RNA polymerase II. The Mediator complex dissociates from the RNA polymerase II holoenzyme and stays at the promoter when transcriptional elongation begins. The polypeptide is Mediator of RNA polymerase II transcription subunit 5 (NUT1) (Saccharomyces cerevisiae (strain ATCC 204508 / S288c) (Baker's yeast)).